We begin with the raw amino-acid sequence, 502 residues long: Cytochrome P450 83A1 (502 aa).

A helical membrane pass occupies residues 1-21 (MEDIIIGVVALAAVLLFFLYQ). Cysteine 442 lines the heme pocket.

It belongs to the cytochrome P450 family. The cofactor is heme.

It is found in the endoplasmic reticulum membrane. The catalysed reaction is an (E)-omega-(methylsulfanyl)-alkanal oxime + glutathione + reduced [NADPH--hemoprotein reductase] + O2 = an S-[(1E)-1-(hydroxyimino)-omega-(methylsulfanyl)alkyl]-L-glutathione + oxidized [NADPH--hemoprotein reductase] + 2 H2O + H(+). Involved in the metabolism of aliphatic and aromatic oximes. Involved in the biosynthesis of both short-chain and long-chain aliphatic glucosinolates. The chain is Cytochrome P450 83A1 (CYP83A1) from Arabidopsis thaliana (Mouse-ear cress).